The primary structure comprises 56 residues: Large ribosomal subunit protein bL32 (56 aa).

The tract at residues 1-37 (MAVQQNKKSRSKRGMRRSHDALSTAQLSVDATSGELH) is disordered. Positions 7 to 16 (KKSRSKRGMR) are enriched in basic residues. Positions 21-31 (ALSTAQLSVDA) are enriched in polar residues.

This sequence belongs to the bacterial ribosomal protein bL32 family.

In Shewanella pealeana (strain ATCC 700345 / ANG-SQ1), this protein is Large ribosomal subunit protein bL32.